A 134-amino-acid chain; its full sequence is Large ribosomal subunit protein bL20 (134 aa).

The protein belongs to the bacterial ribosomal protein bL20 family.

Functionally, binds directly to 23S ribosomal RNA and is necessary for the in vitro assembly process of the 50S ribosomal subunit. It is not involved in the protein synthesizing functions of that subunit. This Brucella anthropi (strain ATCC 49188 / DSM 6882 / CCUG 24695 / JCM 21032 / LMG 3331 / NBRC 15819 / NCTC 12168 / Alc 37) (Ochrobactrum anthropi) protein is Large ribosomal subunit protein bL20.